Here is a 211-residue protein sequence, read N- to C-terminus: MYQPDFPPVPFRLGLYPVVDSVQWIERLLDAGVRTLQLRIKDRRDEEVEADVVAAIALGRRYNARLFINDYWRLAIKHQAYGVHLGQEDLQATDLNAIRAAGLRLGVSTHDDMEIDVALAARPSYIALGHVFPTQTKQMPSAPQGLEQLARHVERLADYPTVAIGGISLARAPAVIATGVGSIAVISAITQAADWRLATAQLLEIAGVGDE.

4-amino-2-methyl-5-(diphosphooxymethyl)pyrimidine contacts are provided by residues 37-41 (QLRIK) and asparagine 69. The Mg(2+) site is built by aspartate 70 and aspartate 89. 4-amino-2-methyl-5-(diphosphooxymethyl)pyrimidine is bound at residue serine 108. 134-136 (TQT) is a binding site for 2-[(2R,5Z)-2-carboxy-4-methylthiazol-5(2H)-ylidene]ethyl phosphate. Residue lysine 137 coordinates 4-amino-2-methyl-5-(diphosphooxymethyl)pyrimidine. 2-[(2R,5Z)-2-carboxy-4-methylthiazol-5(2H)-ylidene]ethyl phosphate is bound by residues glycine 166 and 186–187 (IS).

The protein belongs to the thiamine-phosphate synthase family. Requires Mg(2+) as cofactor.

It carries out the reaction 2-[(2R,5Z)-2-carboxy-4-methylthiazol-5(2H)-ylidene]ethyl phosphate + 4-amino-2-methyl-5-(diphosphooxymethyl)pyrimidine + 2 H(+) = thiamine phosphate + CO2 + diphosphate. The catalysed reaction is 2-(2-carboxy-4-methylthiazol-5-yl)ethyl phosphate + 4-amino-2-methyl-5-(diphosphooxymethyl)pyrimidine + 2 H(+) = thiamine phosphate + CO2 + diphosphate. The enzyme catalyses 4-methyl-5-(2-phosphooxyethyl)-thiazole + 4-amino-2-methyl-5-(diphosphooxymethyl)pyrimidine + H(+) = thiamine phosphate + diphosphate. The protein operates within cofactor biosynthesis; thiamine diphosphate biosynthesis; thiamine phosphate from 4-amino-2-methyl-5-diphosphomethylpyrimidine and 4-methyl-5-(2-phosphoethyl)-thiazole: step 1/1. In terms of biological role, condenses 4-methyl-5-(beta-hydroxyethyl)thiazole monophosphate (THZ-P) and 2-methyl-4-amino-5-hydroxymethyl pyrimidine pyrophosphate (HMP-PP) to form thiamine monophosphate (TMP). The polypeptide is Thiamine-phosphate synthase (Shigella boydii serotype 4 (strain Sb227)).